Consider the following 92-residue polypeptide: Large ribosomal subunit protein bL27 (92 aa).

Residues 1–10 (MLLQLQIQLF) constitute a propeptide that is removed on maturation.

This sequence belongs to the bacterial ribosomal protein bL27 family. In terms of processing, the N-terminus is cleaved by ribosomal processing cysteine protease Prp.

The sequence is that of Large ribosomal subunit protein bL27 from Aster yellows witches'-broom phytoplasma (strain AYWB).